The sequence spans 269 residues: 4-hydroxy-tetrahydrodipicolinate reductase (269 aa).

Residues 13–18 and D39 contribute to the NAD(+) site; that span reads GASGRM. R40 lines the NADP(+) pocket. NAD(+) contacts are provided by residues 101–103 and 125–128; these read GTT and APNM. H158 functions as the Proton donor/acceptor in the catalytic mechanism. H159 is a (S)-2,3,4,5-tetrahydrodipicolinate binding site. K162 serves as the catalytic Proton donor. 168–169 is a (S)-2,3,4,5-tetrahydrodipicolinate binding site; that stretch reads GT.

It belongs to the DapB family.

The protein resides in the cytoplasm. The catalysed reaction is (S)-2,3,4,5-tetrahydrodipicolinate + NAD(+) + H2O = (2S,4S)-4-hydroxy-2,3,4,5-tetrahydrodipicolinate + NADH + H(+). The enzyme catalyses (S)-2,3,4,5-tetrahydrodipicolinate + NADP(+) + H2O = (2S,4S)-4-hydroxy-2,3,4,5-tetrahydrodipicolinate + NADPH + H(+). It functions in the pathway amino-acid biosynthesis; L-lysine biosynthesis via DAP pathway; (S)-tetrahydrodipicolinate from L-aspartate: step 4/4. Functionally, catalyzes the conversion of 4-hydroxy-tetrahydrodipicolinate (HTPA) to tetrahydrodipicolinate. This chain is 4-hydroxy-tetrahydrodipicolinate reductase, found in Bordetella bronchiseptica (strain ATCC BAA-588 / NCTC 13252 / RB50) (Alcaligenes bronchisepticus).